Consider the following 1155-residue polypeptide: DNA-directed RNA polymerase subunit beta (1155 aa).

This sequence belongs to the RNA polymerase beta chain family. The RNAP catalytic core consists of 2 alpha, 1 beta, 1 beta' and 1 omega subunit. When a sigma factor is associated with the core the holoenzyme is formed, which can initiate transcription.

It catalyses the reaction RNA(n) + a ribonucleoside 5'-triphosphate = RNA(n+1) + diphosphate. DNA-dependent RNA polymerase catalyzes the transcription of DNA into RNA using the four ribonucleoside triphosphates as substrates. This is DNA-directed RNA polymerase subunit beta from Borrelia turicatae (strain 91E135).